We begin with the raw amino-acid sequence, 339 residues long: Ribosomal RNA small subunit methyltransferase H (339 aa).

Residues 36-38, Asp-55, Phe-82, Asp-103, and Gln-110 contribute to the S-adenosyl-L-methionine site; that span reads GGY. A disordered region spans residues 286-319; it reads GPIGPSEAEATANPRARSAKLRAGERTDAPIPEP.

Belongs to the methyltransferase superfamily. RsmH family.

It is found in the cytoplasm. It catalyses the reaction cytidine(1402) in 16S rRNA + S-adenosyl-L-methionine = N(4)-methylcytidine(1402) in 16S rRNA + S-adenosyl-L-homocysteine + H(+). Functionally, specifically methylates the N4 position of cytidine in position 1402 (C1402) of 16S rRNA. The protein is Ribosomal RNA small subunit methyltransferase H of Methylobacterium nodulans (strain LMG 21967 / CNCM I-2342 / ORS 2060).